The sequence spans 254 residues: Nickel import ATP-binding protein NikD (254 aa).

The ABC transporter domain occupies 2 to 241 (PQQIELRNIT…PKHTVTRSLV (240 aa)). 36-43 (GGSGSGKS) lines the ATP pocket.

The protein belongs to the ABC transporter superfamily. Nickel importer (TC 3.A.1.5.3) family. As to quaternary structure, the complex is composed of two ATP-binding proteins (NikD and NikE), two transmembrane proteins (NikB and NikC) and a solute-binding protein (NikA).

The protein localises to the cell inner membrane. It carries out the reaction Ni(2+)(out) + ATP + H2O = Ni(2+)(in) + ADP + phosphate + H(+). Functionally, part of the ABC transporter complex NikABCDE involved in nickel import. Responsible for energy coupling to the transport system. The polypeptide is Nickel import ATP-binding protein NikD (Shigella flexneri).